A 308-amino-acid chain; its full sequence is Taste receptor type 2 member 10 (308 aa).

The Extracellular portion of the chain corresponds to methionine 1–glutamate 6. A helical transmembrane segment spans residues glycine 7 to isoleucine 27. The Cytoplasmic segment spans residues glycine 28–threonine 42. A helical transmembrane segment spans residues isoleucine 43 to threonine 63. Over aspartate 64–threonine 100 the chain is Extracellular. N-linked (GlcNAc...) asparagine glycosylation occurs at asparagine 92. A helical membrane pass occupies residues serine 101 to leucine 121. Over lysine 122–asparagine 126 the chain is Cytoplasmic. The chain crosses the membrane as a helical span at residues methionine 127–isoleucine 147. At valine 148–asparagine 179 the chain is on the extracellular side. Residue asparagine 158 is glycosylated (N-linked (GlcNAc...) asparagine). A helical membrane pass occupies residues leucine 180–leucine 200. Over tryptophan 201–lysine 227 the chain is Cytoplasmic. A helical membrane pass occupies residues valine 228–serine 248. At arginine 249 to leucine 257 the chain is on the extracellular side. Residues leucine 258 to isoleucine 278 traverse the membrane as a helical segment. Residues leucine 279–isoleucine 308 lie on the Cytoplasmic side of the membrane.

This sequence belongs to the G-protein coupled receptor T2R family.

Its subcellular location is the membrane. In terms of biological role, receptor that may play a role in the perception of bitterness and is gustducin-linked. May play a role in sensing the chemical composition of the gastrointestinal content. The activity of this receptor may stimulate alpha gustducin, mediate PLC-beta-2 activation and lead to the gating of TRPM5. The sequence is that of Taste receptor type 2 member 10 (TAS2R10) from Pongo pygmaeus (Bornean orangutan).